Consider the following 2764-residue polypeptide: Teneurin-2 (2764 aa).

Residues 1-375 (MDVKDRRHRS…KPSKYCSWKC (375 aa)) enclose the Teneurin N-terminal domain. Residues 1 to 379 (MDVKDRRHRS…YCSWKCAALS (379 aa)) are Cytoplasmic-facing. Phosphoserine is present on residues Ser-90 and Ser-124. The segment at 111-271 (TGSDADSDTE…HHHSSANSLN (161 aa)) is disordered. The segment covering 141–155 (SSGLSSRENSALTLT) has biased composition (polar residues). Residue Thr-155 is modified to Phosphothreonine. At Ser-157 the chain carries Phosphoserine. Positions 159–168 (NENKSDDDNG) are enriched in basic and acidic residues. Positions 174-188 (TSSSSLLPSAQLPSS) are enriched in low complexity. Positions 202–211 (DSNTSHQIMD) are enriched in polar residues. Positions 229 to 240 (SGPQQASSSGPP) are enriched in low complexity. The chain crosses the membrane as a helical span at residues 380–400 (AIAAALLLAILLAYFIAMHLL). The Extracellular segment spans residues 401-2764 (GLNWQLQPAD…FLRQNEMGKR (2364 aa)). Residues Asn-443 and Asn-482 are each glycosylated (N-linked (GlcNAc...) asparagine). 8 consecutive EGF-like domains span residues 575–603 (DCPRNCHGNGECVSGLCHCFPGFLGADCA), 598–634 (LGADCAKAACPVLCSGNGQYSKGTCQCYSGWKGAECD), 636–668 (PMNQCIDPSCGGHGSCIDGNCVCAAGYKGEHCE), 669–701 (EVDCLDPTCSSHGVCVNGECLCSPGWGGLNCEL), 702–735 (ARVQCPDQCSGHGTYLPDSGLCSCDPNWMGPDCS), 737–765 (VCSVDCGTHGVCIGGACRCEEGWTGAACD), 768–796 (VCHPRCIEHGTCKDGKCECREGWNGEHCT), and 798–831 (DGCPDLCNGNGRCTLGQNSWQCVCQTGWRGPGCN). Disulfide bonds link Cys-576–Cys-586, Cys-580–Cys-591, Cys-593–Cys-602, Cys-611–Cys-622, Cys-624–Cys-633, Cys-640–Cys-651, Cys-645–Cys-656, Cys-658–Cys-667, Cys-672–Cys-683, Cys-677–Cys-688, Cys-690–Cys-699, Cys-710–Cys-723, Cys-725–Cys-734, Cys-738–Cys-748, Cys-742–Cys-753, Cys-755–Cys-764, Cys-769–Cys-779, Cys-773–Cys-784, Cys-786–Cys-795, Cys-800–Cys-810, Cys-804–Cys-819, and Cys-821–Cys-830. N-linked (GlcNAc...) asparagine glycans are attached at residues Asn-915, Asn-938, and Asn-1257. NHL repeat units lie at residues 1262–1306 (LELR…VKSL), 1332–1376 (ARCG…NGII), 1391–1442 (LSCD…IAGR), 1464–1491 (LESASAIAISHTGVLYITETDEKKINRL), and 1520–1563 (CYSG…VSKN). One copy of the YD 1 repeat lies at 1573 to 1592 (YEAASPGEQELYVFNADGIH). N-linked (GlcNAc...) asparagine glycosylation occurs at Asn-1606. YD repeat units follow at residues 1609-1629 (YSADNDVTELIDNNGNSLKIR), 1672-1691 (YDGNTGLLATKSDETGWTTF), and 1692-1714 (YDYDHEGRLTNVTRPTGVVTSLH). 5 N-linked (GlcNAc...) asparagine glycosylation sites follow: Asn-1702, Asn-1739, Asn-1763, Asn-1797, and Asn-1882. YD repeat units follow at residues 1885–1904 (YFFNGRLAGLQRGAMSERTD), 1926–1944 (YLDKSMVLLLQSQRQYIFE), 1945–1965 (YDSSDRLHAVTMPSVARHSMS), 1972–1989 (YIRNIYNPPESNASVIFD), 1990–2011 (YSDDGRILKTSFLGTGRQVFYK), 2012–2029 (YGKLSKLSEIVYDSTAVT), 2032–2052 (YDETTGVLKMVNLQSGGFSCT), 2055–2075 (YRKVGPLVDKQIYRFSEEGMI), 2083–2103 (YHDNSFRIASIKPVISETPLP), 2109–2126 (YDEISGKVEHFGKFGVIY), 2127–2153 (YDINQIITTAVMTLSKHFDTHGRIKEV), 2155–2168 (YEMFRSLMYWMTVQ), 2169–2192 (YDSMGRVIKRELKLGPYANTTKYT), 2195–2215 (YDGDGQLQSVAVNDRPTWRYS), 2216–2236 (YDLNGNLHLLNPGNSARLMPL), 2238–2258 (YDLRDRITRLGDVQYKIDDDG), 2270–2290 (YNSKGLLTRAYNKASGWSVQY), and 2292–2312 (YDGVGRRASYKTNLGHHLQYF). A glycan (N-linked (GlcNAc...) asparagine) is linked at Asn-1983. The N-linked (GlcNAc...) asparagine glycan is linked to Asn-2187. Asn-2327 carries N-linked (GlcNAc...) asparagine glycosylation. A YD 23 repeat occupies 2338 to 2379 (YDLQGHLFAMESSSGEEYYVASDNTGTPLAVYSINGLMIKQL). Asn-2638 carries an N-linked (GlcNAc...) asparagine glycan.

It belongs to the tenascin family. Teneurin subfamily. As to quaternary structure, homodimer; disulfide-linked. Heterodimer with either TENM1 or TENM3. May also form heterodimer with TENM4. In terms of processing, derives from the membrane form by proteolytic processing. Post-translationally, derives from the plasma membrane form by proteolytic cleavage and translocates to the nucleus. Homophilic binding of the C-terminal extracellular domain stimulates its proteolytic cleavage and release in the cytoplasmic. Is subjected to rapid degradation by the proteasome pathway. As to expression, expressed in the cortex, CA1, CA2, CA3, dentate gyrus and granular layer of the hippocampus. Expressed in the Purkinje cells and molecular layer of the cerebellum.

It is found in the cell membrane. The protein resides in the presynaptic cell membrane. The protein localises to the postsynaptic cell membrane. It localises to the endoplasmic reticulum. Its subcellular location is the golgi apparatus. It is found in the synapse. The protein resides in the cell projection. The protein localises to the dendritic spine. It localises to the filopodium. Its subcellular location is the growth cone. It is found in the nucleus. The protein resides in the PML body. Functionally, involved in neural development, regulating the establishment of proper connectivity within the nervous system. Acts as a ligand of the ADGRL1 and ADGRL3 receptors that are expressed at the surface of adjacent cells. Promotes the formation of filopodia and enlarged growth cone in neuronal cells. Mediates axon guidance and homophilic and heterophilic cell-cell adhesion. May function as a cellular signal transducer. In terms of biological role, induces gene transcription inhibition. The chain is Teneurin-2 (Tenm2) from Mus musculus (Mouse).